The chain runs to 224 residues: Proteasome subunit beta (224 aa).

A propeptide spans Met-1–Gly-6 (removed in mature form; by autocatalysis). The Nucleophile role is filled by Thr-7.

This sequence belongs to the peptidase T1B family. As to quaternary structure, the 20S proteasome core is composed of 14 alpha and 14 beta subunits that assemble into four stacked heptameric rings, resulting in a barrel-shaped structure. The two inner rings, each composed of seven catalytic beta subunits, are sandwiched by two outer rings, each composed of seven alpha subunits. The catalytic chamber with the active sites is on the inside of the barrel. Has a gated structure, the ends of the cylinder being occluded by the N-termini of the alpha-subunits. Is capped at one or both ends by the proteasome regulatory ATPase, PAN.

It is found in the cytoplasm. The enzyme catalyses Cleavage of peptide bonds with very broad specificity.. The formation of the proteasomal ATPase PAN-20S proteasome complex, via the docking of the C-termini of PAN into the intersubunit pockets in the alpha-rings, triggers opening of the gate for substrate entry. Interconversion between the open-gate and close-gate conformations leads to a dynamic regulation of the 20S proteasome proteolysis activity. Its function is as follows. Component of the proteasome core, a large protease complex with broad specificity involved in protein degradation. The M.jannaschii proteasome is able to cleave oligopeptides after Glu, Asp, Tyr, Phe, Trp, slightly after Arg, but not after Ala. Thus, displays caspase-like and chymotrypsin-like activities and low level of trypsin-like activity. The protein is Proteasome subunit beta of Methanocaldococcus jannaschii (strain ATCC 43067 / DSM 2661 / JAL-1 / JCM 10045 / NBRC 100440) (Methanococcus jannaschii).